Here is a 910-residue protein sequence, read N- to C-terminus: 2-oxoglutarate dehydrogenase E1 component (910 aa).

The protein belongs to the alpha-ketoglutarate dehydrogenase family. Homodimer. Part of the 2-oxoglutarate dehydrogenase (OGDH) complex composed of E1 (2-oxoglutarate dehydrogenase), E2 (dihydrolipoamide succinyltransferase) and E3 (dihydrolipoamide dehydrogenase); the complex contains multiple copies of the three enzymatic components (E1, E2 and E3). Requires thiamine diphosphate as cofactor.

The enzyme catalyses N(6)-[(R)-lipoyl]-L-lysyl-[protein] + 2-oxoglutarate + H(+) = N(6)-[(R)-S(8)-succinyldihydrolipoyl]-L-lysyl-[protein] + CO2. In terms of biological role, E1 component of the 2-oxoglutarate dehydrogenase (OGDH) complex which catalyzes the decarboxylation of 2-oxoglutarate, the first step in the conversion of 2-oxoglutarate to succinyl-CoA and CO(2). The protein is 2-oxoglutarate dehydrogenase E1 component of Staphylococcus aureus (strain N315).